A 366-amino-acid chain; its full sequence is Quinolinate synthase (366 aa).

The iminosuccinate site is built by His-44 and Ser-61. Cys-108 lines the [4Fe-4S] cluster pocket. Iminosuccinate-binding positions include 139-141 and Ser-160; that span reads YIN. Cys-228 lines the [4Fe-4S] cluster pocket. Residues 254–256 and Thr-271 each bind iminosuccinate; that span reads HPE. A [4Fe-4S] cluster-binding site is contributed by Cys-318.

Belongs to the quinolinate synthase family. Type 3 subfamily. The cofactor is [4Fe-4S] cluster.

It is found in the cytoplasm. The catalysed reaction is iminosuccinate + dihydroxyacetone phosphate = quinolinate + phosphate + 2 H2O + H(+). It functions in the pathway cofactor biosynthesis; NAD(+) biosynthesis; quinolinate from iminoaspartate: step 1/1. In terms of biological role, catalyzes the condensation of iminoaspartate with dihydroxyacetone phosphate to form quinolinate. This chain is Quinolinate synthase, found in Listeria innocua serovar 6a (strain ATCC BAA-680 / CLIP 11262).